Here is a 303-residue protein sequence, read N- to C-terminus: Energy-coupling factor transporter ATP-binding protein EcfA2 (303 aa).

Residues 17–260 enclose the ABC transporter domain; that stretch reads LSVSNLSCFF…EAFLAHTTII (244 aa). Residue 54–61 coordinates ATP; it reads GDSGSGKS.

This sequence belongs to the ABC transporter superfamily. Energy-coupling factor EcfA family. As to quaternary structure, forms a stable energy-coupling factor (ECF) transporter complex composed of 2 membrane-embedded substrate-binding proteins (S component), 2 ATP-binding proteins (A component) and 2 transmembrane proteins (T component).

Its subcellular location is the cell membrane. Its function is as follows. ATP-binding (A) component of a common energy-coupling factor (ECF) ABC-transporter complex. Unlike classic ABC transporters this ECF transporter provides the energy necessary to transport a number of different substrates. This chain is Energy-coupling factor transporter ATP-binding protein EcfA2, found in Mycoplasma pneumoniae (strain ATCC 29342 / M129 / Subtype 1) (Mycoplasmoides pneumoniae).